An 89-amino-acid chain; its full sequence is MANHKSAEKRIRQTIKRTERNRFYKTKIKNIIKAVREAVAVNDVAKAQERLKIANKELHKFVSKGILKKNTASRKVSRLNASVKKIALA.

It belongs to the bacterial ribosomal protein bS20 family.

Binds directly to 16S ribosomal RNA. The polypeptide is Small ribosomal subunit protein bS20 (Helicobacter pylori (strain ATCC 700392 / 26695) (Campylobacter pylori)).